The sequence spans 365 residues: Sulfate/thiosulfate import ATP-binding protein CysA (365 aa).

Positions 3–237 (IEIANIKKSF…PATRFVLEFM (235 aa)) constitute an ABC transporter domain. 35–42 (GPSGSGKT) is an ATP binding site.

The protein belongs to the ABC transporter superfamily. Sulfate/tungstate importer (TC 3.A.1.6) family. The complex is composed of two ATP-binding proteins (CysA), two transmembrane proteins (CysT and CysW) and a solute-binding protein (CysP).

Its subcellular location is the cell inner membrane. It catalyses the reaction sulfate(out) + ATP + H2O = sulfate(in) + ADP + phosphate + H(+). The enzyme catalyses thiosulfate(out) + ATP + H2O = thiosulfate(in) + ADP + phosphate + H(+). In terms of biological role, part of the ABC transporter complex CysAWTP involved in sulfate/thiosulfate import. Responsible for energy coupling to the transport system. The chain is Sulfate/thiosulfate import ATP-binding protein CysA from Shigella flexneri.